The chain runs to 313 residues: 3'-5' exoribonuclease YhaM (313 aa).

The segment at residues 22–90 is a DNA-binding region (OB); sequence SSVKGTASNG…QLKIRQIRQA (69 aa). One can recognise an HD domain in the interval 163 to 279; the sequence is HVVSMLRLAK…LHQIDLMDAS (117 aa).

This sequence belongs to the YhaM family.

Shows a 3'-5' exoribonuclease activity. The sequence is that of 3'-5' exoribonuclease YhaM from Listeria innocua serovar 6a (strain ATCC BAA-680 / CLIP 11262).